Reading from the N-terminus, the 292-residue chain is L-serine dehydratase, alpha chain (292 aa).

This sequence belongs to the iron-sulfur dependent L-serine dehydratase family. Heterooctamer of four alpha chains and four beta chains. The cofactor is [4Fe-4S] cluster.

It carries out the reaction L-serine = pyruvate + NH4(+). Its pathway is carbohydrate biosynthesis; gluconeogenesis. The protein is L-serine dehydratase, alpha chain (sdhA) of Peptoniphilus asaccharolyticus (Peptostreptococcus asaccharolyticus).